Reading from the N-terminus, the 389-residue chain is Packaging protein 3 (389 aa).

Residues 1–131 (MHPVLRQMKP…VKAEVNFQTT (131 aa)) are interaction with packaging protein 1. The tract at residues 350–389 (EKENPDGSVSFQQHERGTQSHENGGHAEPAYSRRQLGRFY) is disordered. Residues 362-374 (QHERGTQSHENGG) show a composition bias toward basic and acidic residues.

This sequence belongs to the adenoviridae packaging protein 3 family. Part of the genome packaging complex composed of packaging proteins 1, 2 and 3; this complex specifically binds to the packaging sequence on the left end of viral genomic DNA and performs packaging of the viral genome. Interacts with hexon-linking protein IIIa; this interaction is required to promote correct genome packaging. In terms of processing, cleaved at different sites by the viral protease during virion maturation.

It localises to the host nucleus. In terms of biological role, involved in viral genome packaging through its interaction with packaging proteins 1 and 2. After proteolytic cleavage by adenovirus protease, L1 52/55k protein is removed from the capsid during viral maturation. The chain is Packaging protein 3 from Canine adenovirus serotype 1 (strain CLL) (CAdV-1).